The chain runs to 387 residues: Formate-dependent phosphoribosylglycinamide formyltransferase (387 aa).

N(1)-(5-phospho-beta-D-ribosyl)glycinamide contacts are provided by residues 21 to 22 and E81; that span reads EL. Residues R113, K154, 159-164, 193-196, and E201 contribute to the ATP site; these read SSGHGQ and EEFV. Positions 118-306 constitute an ATP-grasp domain; the sequence is VFAAETLDLK…EFALHVRAVL (189 aa). Residues E265 and E277 each contribute to the Mg(2+) site. N(1)-(5-phospho-beta-D-ribosyl)glycinamide is bound by residues D284, K352, and 359 to 360; that span reads RR.

It belongs to the PurK/PurT family. As to quaternary structure, homodimer.

The enzyme catalyses N(1)-(5-phospho-beta-D-ribosyl)glycinamide + formate + ATP = N(2)-formyl-N(1)-(5-phospho-beta-D-ribosyl)glycinamide + ADP + phosphate + H(+). The protein operates within purine metabolism; IMP biosynthesis via de novo pathway; N(2)-formyl-N(1)-(5-phospho-D-ribosyl)glycinamide from N(1)-(5-phospho-D-ribosyl)glycinamide (formate route): step 1/1. Functionally, involved in the de novo purine biosynthesis. Catalyzes the transfer of formate to 5-phospho-ribosyl-glycinamide (GAR), producing 5-phospho-ribosyl-N-formylglycinamide (FGAR). Formate is provided by PurU via hydrolysis of 10-formyl-tetrahydrofolate. The chain is Formate-dependent phosphoribosylglycinamide formyltransferase from Sulfurovum sp. (strain NBC37-1).